The sequence spans 264 residues: Thiazole synthase (264 aa).

Lys-106 serves as the catalytic Schiff-base intermediate with DXP. 1-deoxy-D-xylulose 5-phosphate-binding positions include Gly-167, Ala-193–Gly-194, and Asn-215–Thr-216.

This sequence belongs to the ThiG family. As to quaternary structure, homotetramer. Forms heterodimers with either ThiH or ThiS.

It localises to the cytoplasm. It carries out the reaction [ThiS sulfur-carrier protein]-C-terminal-Gly-aminoethanethioate + 2-iminoacetate + 1-deoxy-D-xylulose 5-phosphate = [ThiS sulfur-carrier protein]-C-terminal Gly-Gly + 2-[(2R,5Z)-2-carboxy-4-methylthiazol-5(2H)-ylidene]ethyl phosphate + 2 H2O + H(+). The protein operates within cofactor biosynthesis; thiamine diphosphate biosynthesis. Its function is as follows. Catalyzes the rearrangement of 1-deoxy-D-xylulose 5-phosphate (DXP) to produce the thiazole phosphate moiety of thiamine. Sulfur is provided by the thiocarboxylate moiety of the carrier protein ThiS. In vitro, sulfur can be provided by H(2)S. The protein is Thiazole synthase of Xylella fastidiosa (strain 9a5c).